The following is a 414-amino-acid chain: 26S proteasome regulatory subunit 8 homolog (414 aa).

197 to 204 (GPPGTGKT) serves as a coordination point for ATP.

This sequence belongs to the AAA ATPase family.

The protein localises to the cytoplasm. It localises to the nucleus. In terms of biological role, the 26S proteasome is involved in the ATP-dependent degradation of ubiquitinated proteins. The regulatory (or ATPase) complex confers ATP dependency and substrate specificity to the 26S complex. This Naegleria fowleri (Brain eating amoeba) protein is 26S proteasome regulatory subunit 8 homolog.